A 377-amino-acid polypeptide reads, in one-letter code: MFASLSSAWMLRLKKYGYWIWLIAVLGIPLSYWWSLGSDYPNAWPWLVISVVFGLIPILDAIVGRDPANPEEASEVPEMEAQGYYRVLSLATVPLLLGMLVWSGWILAHETRWDWVGQLGWILSVGTVMGAIGITVSHELIHKDPQLEQNAGGLLLAAVCYAGFKVEHVRGHHVHVSTPEDASSSRYGQSLYSFLPHAYKHNFLNAWRLEAERLKRKGLPALHWRNELIWWYAISALFLLGFSLAFGWLGAIFFLGQSVMAFTLLEIVNYVEHYGLHRRRLDNGRYERTTPEHSWNSNFLLTNLFLFHLQRHSDHHAYAKRRYQVLRHYDSSPQLPNGYAGMIVLALFPPLWRAVMDPKVRAYYAGEEYQLTDTQRI.

A run of 4 helical transmembrane segments spans residues 17–37 (GYWI…WSLG), 43–63 (AWPW…DAIV), 87–107 (VLSL…GWIL), and 116–136 (VGQL…GITV). Residues histidine 138, histidine 142, histidine 168, histidine 172, and histidine 173 each contribute to the Fe cation site. The helical transmembrane segment at 236-256 (ALFLLGFSLAFGWLGAIFFLG) threads the bilayer. Fe cation is bound by residues histidine 312, histidine 315, and histidine 316.

The protein belongs to the fatty acid desaturase type 1 family. AlkB subfamily. Fe(3+) serves as cofactor.

Its subcellular location is the cell inner membrane. It catalyses the reaction octane + 2 reduced [rubredoxin] + O2 + 2 H(+) = 2 oxidized [rubredoxin] + octan-1-ol + H2O. It participates in hydrocarbon metabolism; alkane degradation. In terms of biological role, catalyzes the hydroxylation of n-alkanes in the presence of a NADH-rubredoxin reductase and rubredoxin. It preferably hydroxylases C12-C20 hydrocarbons. The chain is Alkane 1-monooxygenase 2 (alkB2) from Pseudomonas aeruginosa (strain ATCC 15692 / DSM 22644 / CIP 104116 / JCM 14847 / LMG 12228 / 1C / PRS 101 / PAO1).